The primary structure comprises 367 residues: UDP-N-acetylenolpyruvoylglucosamine reductase 2 (367 aa).

The region spanning 31–198 (IGGKPRSAVR…LAIELQLLTD (168 aa)) is the FAD-binding PCMH-type domain. Arg176 is an active-site residue. Ser256 functions as the Proton donor in the catalytic mechanism. The active site involves Glu357.

This sequence belongs to the MurB family. The cofactor is FAD.

The protein resides in the cytoplasm. The catalysed reaction is UDP-N-acetyl-alpha-D-muramate + NADP(+) = UDP-N-acetyl-3-O-(1-carboxyvinyl)-alpha-D-glucosamine + NADPH + H(+). The protein operates within cell wall biogenesis; peptidoglycan biosynthesis. In terms of biological role, cell wall formation. This chain is UDP-N-acetylenolpyruvoylglucosamine reductase 2 (murB2), found in Corynebacterium glutamicum (strain ATCC 13032 / DSM 20300 / JCM 1318 / BCRC 11384 / CCUG 27702 / LMG 3730 / NBRC 12168 / NCIMB 10025 / NRRL B-2784 / 534).